Reading from the N-terminus, the 295-residue chain is UDP-N-acetylenolpyruvoylglucosamine reductase (295 aa).

The region spanning 25–189 (RVGGPADLFA…LEALFRLDQR (165 aa)) is the FAD-binding PCMH-type domain. The active site involves Arg169. The Proton donor role is filled by Ser218. Glu288 is an active-site residue.

This sequence belongs to the MurB family. It depends on FAD as a cofactor.

It is found in the cytoplasm. The enzyme catalyses UDP-N-acetyl-alpha-D-muramate + NADP(+) = UDP-N-acetyl-3-O-(1-carboxyvinyl)-alpha-D-glucosamine + NADPH + H(+). Its pathway is cell wall biogenesis; peptidoglycan biosynthesis. Cell wall formation. The chain is UDP-N-acetylenolpyruvoylglucosamine reductase from Pelobacter propionicus (strain DSM 2379 / NBRC 103807 / OttBd1).